A 263-amino-acid polypeptide reads, in one-letter code: HTH-type transcriptional repressor NanR (263 aa).

The 69-residue stretch at 30 to 98 (KKLSEMVEEE…NGERARVSRP (69 aa)) folds into the HTH gntR-type domain. The segment at residues 58 to 77 (ERELMAFFNVGRPSVREALA) is a DNA-binding region (H-T-H motif).

The protein belongs to the NanR family.

In terms of biological role, transcriptional repressor that controls expression of the genes required for the catabolism of sialic acids. In Salmonella bongori (strain ATCC 43975 / DSM 13772 / NCTC 12419), this protein is HTH-type transcriptional repressor NanR.